We begin with the raw amino-acid sequence, 216 residues long: 2-phospho-L-lactate guanylyltransferase (216 aa).

This sequence belongs to the CofC family. As to quaternary structure, homodimer.

It catalyses the reaction (2S)-2-phospholactate + GTP + H(+) = (2S)-lactyl-2-diphospho-5'-guanosine + diphosphate. It participates in cofactor biosynthesis; coenzyme F420 biosynthesis. In terms of biological role, guanylyltransferase that catalyzes the activation of (2S)-2-phospholactate (2-PL) as (2S)-lactyl-2-diphospho-5'-guanosine, via the condensation of 2-PL with GTP. It is involved in the biosynthesis of coenzyme F420, a hydride carrier cofactor. The sequence is that of 2-phospho-L-lactate guanylyltransferase from Methanocaldococcus infernus (strain DSM 11812 / JCM 15783 / ME).